A 766-amino-acid chain; its full sequence is DENN domain-containing protein 1B (766 aa).

One can recognise a uDENN domain in the interval 14–143; it reads DLVLKVKCHA…YNHPVPKANT (130 aa). A cDENN domain is found at 160-296; the sequence is GLPTIPESRN…VVSALKNKLK (137 aa). In terms of domain architecture, dDENN spans 298–375; that stretch reads QSTATGDGVA…DGRLAKLNAG (78 aa). Positions 378-382 match the FXDXF motif motif; the sequence is FSDIF. Residues 472–523 form a disordered region; that stretch reads NEKGENREKHKLSQTHLKRPHKSLDGTLYDDDDDDDDIERASKISSEDGEET. Positions 480 to 492 are enriched in basic residues; that stretch reads KHKLSQTHLKRPH. The segment covering 499–509 has biased composition (acidic residues); it reads LYDDDDDDDDI. Tyr-500 carries the post-translational modification Phosphotyrosine. Phosphoserine occurs at positions 516, 517, 530, and 533. Residues 547–556 carry the Clathrin box motif; it reads DLLGEILDTL. Disordered regions lie at residues 611 to 634 and 652 to 732; these read LGQD…VSSG and LCAD…KPSK. A phosphoserine mark is found at Ser-632 and Ser-633. The segment covering 694 to 704 has biased composition (polar residues); that stretch reads TPGQAPLQSED. Over residues 722-732 the composition is skewed to basic and acidic residues; sequence KAGKEDTKPSK.

In terms of assembly, interacts with RAB35. Interacts with clathrin heavy chain/CLTC. Interacts with components of the adapter protein complex 2 (AP-2) AP2A2 and AP2B1. Interacts with CD3E. Phosphorylated on serine and/or threonine, possibly regulating the guanine nucleotide exchange factor (GEF) activity. In terms of tissue distribution, expressed in a subset of dendritic cells (DCs).

The protein localises to the cytoplasm. It is found in the cytosol. Its subcellular location is the cytoplasmic vesicle. It localises to the clathrin-coated vesicle. In terms of biological role, guanine nucleotide exchange factor (GEF) for RAB35 that acts as a regulator of T-cell receptor (TCR) internalization in TH2 cells. Acts by promoting the exchange of GDP to GTP, converting inactive GDP-bound RAB35 into its active GTP-bound form. Plays a role in clathrin-mediated endocytosis. Controls cytokine production in TH2 lymphocytes by controlling the rate of TCR internalization and routing to endosomes: acts by mediating clathrin-mediated endocytosis of TCR via its interaction with the adapter protein complex 2 (AP-2) and GEF activity. Dysregulation leads to impaired TCR down-modulation and recycling, affecting cytokine production in TH2 cells. The polypeptide is DENN domain-containing protein 1B (Mus musculus (Mouse)).